A 66-amino-acid chain; its full sequence is Large ribosomal subunit protein bL35 (66 aa).

Composition is skewed to basic residues over residues Met-1–Arg-16 and His-31–Arg-45. The tract at residues Met-1–Ala-52 is disordered.

This sequence belongs to the bacterial ribosomal protein bL35 family.

In Ligilactobacillus salivarius (strain UCC118) (Lactobacillus salivarius), this protein is Large ribosomal subunit protein bL35.